A 297-amino-acid polypeptide reads, in one-letter code: Averufin oxidase stcO (297 aa).

Residues 277-297 (VVVLGVCILLLLGGLLYSIKA) form a helical membrane-spanning segment.

This sequence belongs to the avfA family.

It localises to the membrane. It participates in mycotoxin biosynthesis; sterigmatocystin biosynthesis. Its function is as follows. Averufin oxidase; part of the gene cluster that mediates the biosynthesis of sterigmatocystin (ST), a polyketide-derived furanocoumarin which is part of the most toxic and carcinogenic compounds among the known mycotoxins. The first step in the biosynthesis of sterigmatocystin is the production of hexanoate by the fatty acid synthase (FAS) units stcJ and stcK. The polyketide backbone is assembled by the non-reducing polyketide synthase stcA by condensation of the starter hexanoyl-CoA and 7 malonyl-CoA extender units followed by cyclization and release of norsolorinic acid. Norsolorinic acid is the first stable intermediate in the biosynthesis of sterigmatocystin and is converted into averantin (AVN) by the ketoreductase stcE which reduces the hexanoate ketone to an alcohol. Averantin is then oxidized into 5'-hydroxyaverantin (HAVN) by the cytochrome P450 monooxygenase stcF. 5'-hydroxyaverantin is further converted to 5'-oxyaverantin (OAVN) by the 5'-hydroxyaverantin dehydrogenase stcG. The next step is the conversion of OAVN into averufin (AVF) which is catalyzed by a yet to be identified enzyme. The cytochrome P450 monooxygenase stcB and the flavin-binding monooxygenase stcW are both required for the conversion of averufin to 1-hydroxyversicolorone. The esterase stcI probably catalyzes the formation of versiconal hemiacetal acetate from 1-hydroxyversicolorone. The oxydoreductase stcN then probably catalyzes the biosynthetic step from versiconal to versicolorin B (VERB). The next step is performed by the versicolorin B desaturase stcL to produce versicolorin A (VERA). The ketoreductase stcU and the cytochrome P450 monooxygenase stcS are involved in the conversion of versicolorin A to demethylsterigmatocystin. The Baeyer-Villiger oxidas stcQ and the reductase stcR might be involved in the biosynthetic step from versicolorin A to demethylsterigmatocystin. The final step in the biosynthesis of sterigmatocystin is the methylation of demethylsterigmatocystin catalyzed by the methyltransferase stcP. In Emericella nidulans (strain FGSC A4 / ATCC 38163 / CBS 112.46 / NRRL 194 / M139) (Aspergillus nidulans), this protein is Averufin oxidase stcO.